We begin with the raw amino-acid sequence, 141 residues long: Regulator of ribonuclease activity B (141 aa).

The tract at residues 112-141 is disordered; sequence GTYFEDPNAPDDEDDNDDLFPPEEDEPRLH. Residues 119–141 show a composition bias toward acidic residues; the sequence is NAPDDEDDNDDLFPPEEDEPRLH.

Belongs to the RraB family. As to quaternary structure, interacts with the C-terminal region of Rne.

The protein localises to the cytoplasm. Functionally, globally modulates RNA abundance by binding to RNase E (Rne) and regulating its endonucleolytic activity. Can modulate Rne action in a substrate-dependent manner by altering the composition of the degradosome. This is Regulator of ribonuclease activity B from Xenorhabdus nematophila (strain ATCC 19061 / DSM 3370 / CCUG 14189 / LMG 1036 / NCIMB 9965 / AN6).